A 636-amino-acid chain; its full sequence is Nucleolin 2 (636 aa).

Disordered regions lie at residues M1–L386, A458–I481, and S544–E636. Composition is skewed to basic and acidic residues over residues K43 to E63 and E76 to S89. Over residues S90–I103 the composition is skewed to acidic residues. Over residues A104–V118 the composition is skewed to basic and acidic residues. Composition is skewed to acidic residues over residues S122–T133, S152–T163, and S182–T193. A compositionally biased stretch (basic and acidic residues) spans T224–S238. Acidic residues-rich tracts occupy residues S267–P278, S299–D311, and S331–K341. The segment covering E342–S367 has biased composition (basic and acidic residues). A compositionally biased stretch (polar residues) spans N368–S383. RRM domains lie at K384–E460 and R479–P558. The segment covering P464–I481 has biased composition (polar residues). 2 stretches are compositionally biased toward basic and acidic residues: residues H552–S566 and R579–A604. The span at M622 to E636 shows a compositional bias: polar residues.

As to quaternary structure, interacts with THAL in the nucleus. Expressed at low levels in flower buds.

Its subcellular location is the nucleus. The protein resides in the nucleolus. In terms of biological role, involved in pre-rRNA processing and ribosome assembly. This Arabidopsis thaliana (Mouse-ear cress) protein is Nucleolin 2.